Consider the following 335-residue polypeptide: 2-acylglycerol O-acyltransferase 1 (335 aa).

A run of 2 helical transmembrane segments spans residues 24 to 44 and 104 to 124; these read WLLSFLLFAQVCLGIIVFLII and YIFGFHPHGVLVVGAFGNFCT. N-linked (GlcNAc...) asparagine glycans are attached at residues Asn-125 and Asn-180.

This sequence belongs to the diacylglycerol acyltransferase family.

The protein resides in the endoplasmic reticulum membrane. It carries out the reaction a 2-acylglycerol + an acyl-CoA = a 1,2-diacylglycerol + CoA. The enzyme catalyses 2-(9Z-octadecenoyl)-glycerol + butanoyl-CoA = 1-butanoyl-2-(9Z-octadecenoyl)-glycerol + CoA. The catalysed reaction is 2-(9Z-octadecenoyl)-glycerol + octanoyl-CoA = 1-octanoyl-2-(9Z-octadecenoyl)-glycerol + CoA. It catalyses the reaction 2-(9Z-octadecenoyl)-glycerol + dodecanoyl-CoA = 1-dodecanoyl-2-(9Z-octadecenoyl)-glycerol + CoA. It carries out the reaction 2-(9Z-octadecenoyl)-glycerol + tetradecanoyl-CoA = 1-tetradecanoyl-2-(9Z-octadecenoyl)-glycerol + CoA. The enzyme catalyses 2-(9Z-octadecenoyl)-glycerol + hexadecanoyl-CoA = 1-hexadecanoyl-2-(9Z-octadecenoyl)-glycerol + CoA. The catalysed reaction is 2-(9Z-octadecenoyl)-glycerol + octadecanoyl-CoA = 1-octadecanoyl-2-(9Z-octadecenoyl)-glycerol + CoA. It catalyses the reaction eicosanoyl-CoA + 2-(9Z-octadecenoyl)-glycerol = 1-eicosanoyl-2-(9Z-octadecenoyl)-glycerol + CoA. It carries out the reaction 2-(9Z-octadecenoyl)-glycerol + (9Z)-octadecenoyl-CoA = 1,2-di-(9Z-octadecenoyl)-glycerol + CoA. The enzyme catalyses 2-(9Z-octadecenoyl)-glycerol + (9Z,12Z)-octadecadienoyl-CoA = 1-(9Z,12Z-octadecadienoyl)-2-(9Z-octadecenoyl)-glycerol + CoA. The catalysed reaction is 2-(9Z-octadecenoyl)-glycerol + (5Z,8Z,11Z,14Z)-eicosatetraenoyl-CoA = 1-(5Z,8Z,11Z,14Z-eicosatetraenoyl)-2-(9Z-octadecenoyl)-glycerol + CoA. It catalyses the reaction a 2-acylglycerol + an acyl-CoA = a 1,2-diacyl-sn-glycerol + CoA. It carries out the reaction a 2-acylglycerol + an acyl-CoA = a 2,3-diacyl-sn-glycerol + CoA. The enzyme catalyses a 1-acylglycerol + an acyl-CoA = a 1,2-diacylglycerol + CoA. The catalysed reaction is 1-dodecanoylglycerol + (9Z)-octadecenoyl-CoA = 1-dodecanoyl-2-(9Z-octadecenoyl)-glycerol + CoA. It catalyses the reaction 1-tetradecanoylglycerol + (9Z)-octadecenoyl-CoA = 1-tetradecanoyl-2-(9Z-octadecenoyl)-glycerol + CoA. It carries out the reaction 1-hexadecanoylglycerol + (9Z)-octadecenoyl-CoA = 1-hexadecanoyl-2-(9Z-octadecenoyl)-glycerol + CoA. The enzyme catalyses 1-(9Z-octadecenoyl)-glycerol + (9Z)-octadecenoyl-CoA = 1,2-di-(9Z-octadecenoyl)-glycerol + CoA. The catalysed reaction is 1-(9Z,12Z-octadecadienoyl)-glycerol + (9Z)-octadecenoyl-CoA = 1-(9Z,12Z-octadecadienoyl)-2-(9Z-octadecenoyl)-glycerol + CoA. It catalyses the reaction 1-(9Z,12Z,15Z-octadecatrienoyl)-glycerol + (9Z)-octadecenoyl-CoA = 1-(9Z,12Z,15Z-octadecatrienoyl)-2-(9Z-octadecenoyl)-glycerol + CoA. It carries out the reaction 1-(5Z,8Z,11Z,14Z-eicosatetraenoyl)-glycerol + (9Z)-octadecenoyl-CoA = 1-(5Z,8Z,11Z,14Z-eicosatetraenoyl)-2-(9Z-octadecenoyl)-glycerol + CoA. The enzyme catalyses a 1-acylglycerol + an acyl-CoA = a 1,3-diacylglycerol + CoA. The catalysed reaction is 1-dodecanoylglycerol + (9Z)-octadecenoyl-CoA = 1-dodecanoyl-3-(9Z-octadecenoyl)-glycerol + CoA. It catalyses the reaction 1-hexadecanoylglycerol + (9Z)-octadecenoyl-CoA = 1-(9Z-octadecenoyl)-3-hexadecanoylglycerol + CoA. It carries out the reaction 1-octadecanoylglycerol + (9Z)-octadecenoyl-CoA = 1-octadecanoyl-3-(9Z-octadecenoyl)-glycerol + CoA. The enzyme catalyses 1-(9Z-octadecenoyl)-sn-glycerol + (9Z)-octadecenoyl-CoA = 1,3-di-(9Z-octadecenoyl)-glycerol + CoA. The catalysed reaction is 1-(9Z,12Z-octadecadienoyl)-glycerol + (9Z)-octadecenoyl-CoA = 1-(9Z-octadecenoyl)-3-(9Z,12Z-octadecadienoyl)-glycerol + CoA. It catalyses the reaction 1-(9Z,12Z,15Z-octadecatrienoyl)-glycerol + (9Z)-octadecenoyl-CoA = 1-(9Z,12Z,15Z-octadecatrienoyl)-3-(9Z-octadecenoyl)-glycerol + CoA. It carries out the reaction a 1-acyl-sn-glycerol + an acyl-CoA = a 1,3-diacyl-sn-glycerol + CoA. The enzyme catalyses a 3-acyl-sn-glycerol + an acyl-CoA = a 1,3-diacyl-sn-glycerol + CoA. The catalysed reaction is 3-octadecanoyl-sn-glycerol + (9Z)-octadecenoyl-CoA = 1-(9Z-octadecenoyl)-3-octadecanoyl-sn-glycerol + CoA. Its pathway is glycerolipid metabolism; triacylglycerol biosynthesis. Functionally, involved in glycerolipid synthesis and lipid metabolism. Catalyzes the formation of diacylglycerol, the precursor of triacylglycerol, by transferring the acyl chain of a fatty acyl-CoA to a monoacylglycerol, mainly at the sn-1 or sn-3 positions. It uses both sn-2-monoacylglycerol (2-acylglycerol) and sn-1-monoacylglycerol (1-acyl-sn-glycerol) equally well as substrates, and uses sn-3-monoacylglycerol (3-acyl-sn-glycerol) with lower efficiency. Probably not involved in absorption of dietary fat in the small intestine. This is 2-acylglycerol O-acyltransferase 1 (MOGAT1) from Bos taurus (Bovine).